The following is a 139-amino-acid chain: Lamprin 0.9 (139 aa).

The N-terminal stretch at 1 to 19 (MAAAIQALLVLALLHLATA) is a signal peptide. 8 repeat units span residues 42–46 (GGLGY), 47–51 (GGLGY), 52–56 (GGLGV), 57–61 (AGLGV), 62–66 (AGLGY), 67–71 (GGLGY), 92–96 (GGLGY), and 106–110 (GGLGY). Positions 42 to 110 (GGLGYGGLGY…YHHALGGLGY (69 aa)) are 8 X 5 AA approximate repeats.

As to quaternary structure, the polymeric lamprin chains self-aggregate to form fibers and have secondary structures particularly rich in beta-sheets and in beta-turns.

The protein localises to the secreted. It is found in the extracellular space. The protein resides in the extracellular matrix. Functionally, self-aggregating protein that is part of the soluble form of lamprin. The chain is Lamprin 0.9 from Petromyzon marinus (Sea lamprey).